Here is a 258-residue protein sequence, read N- to C-terminus: MYECMFFSHRLTIGFYIPLIVLTTMSSLSESLGERQKTACTVAAISCANSDTYNRTTVSNHTFFYISDRWKYSELIRYEKPTGDLRHDKLIHVDREFLDIVSLLHNNENQLRTLLTIFRSDSAPPWVKFMRGYSQCLDHPIIYTCVEEKCQQYNLEELPYGKDIFLENVVGFDLGAPPHNMSVLIAVSNTKPKITKVLRITSTSLTLFDALYNTVLTFFRSIGARNVDVVRRLILYQASLSGPHRDAPIHNYLNRDLS.

The first 31 residues, 1–31, serve as a signal peptide directing secretion; that stretch reads MYECMFFSHRLTIGFYIPLIVLTTMSSLSES. The region spanning 36 to 243 is the gL betaherpesvirus-type domain; the sequence is QKTACTVAAI…ILYQASLSGP (208 aa). A disulfide bond links Cys145 and Cys150.

The protein belongs to the herpesviridae glycoprotein L (gL) family. Betaherpesvirinae gL subfamily. As to quaternary structure, interacts with glycoprotein H (gH); this interaction is necessary for the correct processing and cell surface expression of gH. Forms the envelope pentamer complex (PC) composed of gH, gL, UL128, UL130, and UL131A. The pentamer interacts with host NRP2. Forms the envelope trimer complex composed of gH, gL, and gO. The trimer interacts with host PDGFRA.

The protein resides in the virion membrane. The protein localises to the host cell membrane. It is found in the host Golgi apparatus. Its subcellular location is the host trans-Golgi network. The heterodimer glycoprotein H-glycoprotein L is required for the fusion of viral and plasma membranes leading to virus entry into the host cell. Acts as a functional inhibitor of gH and maintains gH in an inhibited form. Upon binding to host integrins, gL dissociates from gH leading to activation of the viral fusion glycoproteins gB and gH. In human cytomegalovirus, forms two distincts complexes to mediate viral entry, a trimer and a pentamer at the surface of the virion envelope. The gH-gL-gO trimer is required for infection in fibroblasts by interacting with host PDGFRA. The gH-gL-UL128-UL130-UL131A pentamer is essential for viral entry in epithelial, endothelial and myeloid cells via interaction with host NRP2. The protein is Envelope glycoprotein L of Guinea pig cytomegalovirus (strain 22122) (GPCMV).